The primary structure comprises 244 residues: uncharacterized protein (244 aa).

Residues 1 to 18 form the signal peptide; sequence MQFSVLCKFLLLVTAVMA. Over 19-223 the chain is Lumenal; sequence QTEYTPGFTT…TTIPSSAVHY (205 aa). Low complexity-rich tracts occupy residues 55–65 and 75–128; these read ETSTHSVTSTN and TSHN…TTHV. Positions 55 to 128 are disordered; it reads ETSTHSVTST…TTVVPPTTHV (74 aa). Residues 224–244 form a helical membrane-spanning segment; that stretch reads ASPSGLLALVVMLISAFAFLA.

The protein localises to the endoplasmic reticulum membrane. This is an uncharacterized protein from Schizosaccharomyces pombe (strain 972 / ATCC 24843) (Fission yeast).